The sequence spans 404 residues: Cytochrome b561 and DOMON domain-containing protein At5g35735 (404 aa).

Positions 1–25 (MDRTQSPKTALFAVLATLLVLTVNG) are cleaved as a signal peptide. Residues 49–164 (LGSFLHWTYN…ITANQLWQVG (116 aa)) enclose the DOMON domain. Residues 170 to 369 (VPASHQTSGD…LEPLTWFIVL (200 aa)) form the Cytochrome b561 domain. Positions 172-207 (ASHQTSGDNMRSSGRIDFRTGQASAGGGGSGDRLRK) are disordered. Residues 173 to 183 (SHQTSGDNMRS) are compositionally biased toward polar residues. 2 helical membrane-spanning segments follow: residues 210–230 (THGV…AMMA) and 241–261 (WFYL…AGWA). Positions 211, 245, and 278 each coordinate heme b. The chain crosses the membrane as a helical span at residues 280-300 (NLGIALFTFATLQVFALLVRP). H314 serves as a coordination point for heme b. 2 helical membrane-spanning segments follow: residues 316–336 (TVGY…FDIL) and 349–369 (ILIF…FIVL). The tract at residues 376–404 (GNTVAAPTSSKYSNGVNGTTTTGPHHQDA) is disordered. The segment covering 380–404 (AAPTSSKYSNGVNGTTTTGPHHQDA) has biased composition (polar residues).

Heme b serves as cofactor.

It localises to the membrane. Its function is as follows. May act as a catecholamine-responsive trans-membrane electron transporter. This chain is Cytochrome b561 and DOMON domain-containing protein At5g35735, found in Arabidopsis thaliana (Mouse-ear cress).